A 433-amino-acid polypeptide reads, in one-letter code: 23S rRNA (uracil(1939)-C(5))-methyltransferase RlmD (433 aa).

Residues 10 to 68 form the TRAM domain; that stretch reads RTTTRQIITVSVNDLDSFGQGVARHNGKTLFIPGLLPQENAEVAVTEDKKQYARAKVVR. Residues Cys-81, Cys-87, Cys-90, and Cys-162 each contribute to the [4Fe-4S] cluster site. 6 residues coordinate S-adenosyl-L-methionine: Gln-265, Phe-294, Asn-299, Glu-315, Asn-342, and Asp-363. Cys-389 serves as the catalytic Nucleophile.

Belongs to the class I-like SAM-binding methyltransferase superfamily. RNA M5U methyltransferase family. RlmD subfamily.

The enzyme catalyses uridine(1939) in 23S rRNA + S-adenosyl-L-methionine = 5-methyluridine(1939) in 23S rRNA + S-adenosyl-L-homocysteine + H(+). Catalyzes the formation of 5-methyl-uridine at position 1939 (m5U1939) in 23S rRNA. The polypeptide is 23S rRNA (uracil(1939)-C(5))-methyltransferase RlmD (Shigella flexneri serotype 5b (strain 8401)).